The chain runs to 365 residues: Flagellar P-ring protein (365 aa).

A signal peptide spans 1-21 (MKSLRLVALFCCLLPLGMAHA).

This sequence belongs to the FlgI family. The basal body constitutes a major portion of the flagellar organelle and consists of four rings (L,P,S, and M) mounted on a central rod.

It is found in the periplasm. The protein localises to the bacterial flagellum basal body. Assembles around the rod to form the L-ring and probably protects the motor/basal body from shearing forces during rotation. The sequence is that of Flagellar P-ring protein from Aeromonas hydrophila subsp. hydrophila (strain ATCC 7966 / DSM 30187 / BCRC 13018 / CCUG 14551 / JCM 1027 / KCTC 2358 / NCIMB 9240 / NCTC 8049).